A 560-amino-acid polypeptide reads, in one-letter code: Nuclear receptor subfamily 5 group A member 2 (560 aa).

The tract at residues 17-54 (GLPAIAPAPGSETPHSPKLEEKHREKRAGLPDRHRRPI) is disordered. Basic and acidic residues predominate over residues 31 to 48 (HSPKLEEKHREKRAGLPD). The nuclear receptor DNA-binding region spans 104–179 (EELCPVCGDK…VGMKLEAVRA (76 aa)). Residues cysteine 107, cysteine 110, cysteine 124, cysteine 127, cysteine 143, cysteine 149, cysteine 159, and cysteine 162 each coordinate Zn(2+). NR C4-type zinc fingers lie at residues 107 to 127 (CPVC…CESC) and 143 to 162 (CIEN…CPYC). The tract at residues 173–188 (KLEAVRADRMRGGRNK) is C-terminal extension (CTE). Positions 189-208 (FGPMYKRDRALKQQKKALIR) match the FTZ-F1 box motif. Lysine 289 is covalently cross-linked (Glycyl lysine isopeptide (Lys-Gly) (interchain with G-Cter in SUMO1)). The NR LBD domain maps to 319–558 (SIPHLILELL…NLLIEMLHAK (240 aa)). A phospholipid derivative is bound by residues tyrosine 535 and lysine 539. The interval 547–558 (YNNLLIEMLHAK) is AF-2.

The protein belongs to the nuclear hormone receptor family. NR5 subfamily. In terms of assembly, monomer; Binds DNA as a monomer. Interacts with nuclear receptor corepressors NR0B1 and NR0B2; repressing NR5A2 nuclear receptor activity. Interacts with nuclear receptor coactivators CTNNB1, PPARGC1A and NCOA2; interaction takes place following ligand-binding and promotes target gene activation. Interacts (when sumoylated) with GPS2; interaction with GPS2 onto hepatic acute phase protein promoters prevents N-Cor corepressor complex dissociation. Interacts with HNF1A. Interacts with GRIP1. Sumoylated by SUMO1 at Lys-289 during the hepatic acute phase response, leading to promote interaction with GPS2 and prevent N-Cor corepressor complex dissociation.

It localises to the nucleus. It is found in the chromosome. Its function is as follows. Orphan nuclear receptor that binds DNA as a monomer to the 5'-TCAAGGCCA-3' sequence and controls expression of target genes: regulates key biological processes, such as early embryonic development, cholesterol and bile acid synthesis pathways, as well as liver and pancreas morphogenesis. Ligand-binding causes conformational change which causes recruitment of coactivators, promoting target gene activation. The specific ligand is unknown, but specific phospholipids, such as phosphatidylethanolamine, phosphatidylserine, dilauroyl phosphatidylcholine and diundecanoyl phosphatidylcholine can act as ligand in vitro. Acts as a pioneer transcription factor, which unwraps target DNA from histones and elicits local opening of closed chromatin. Plays a central role during preimplantation stages of embryonic development. Plays a minor role in zygotic genome activation (ZGA) by regulating a small set of two-cell stage genes. Plays a major role in morula development (2-16 cells embryos) by acting as a master regulator at the 8-cell stage, controlling expression of lineage-specifying transcription factors and genes involved in mitosis, telomere maintenance and DNA repair. Zygotic NR5A2 binds to both closed and open chromatin with other transcription factors, often at SINE B1/Alu repeats DNA elements, promoting chromatin accessibility at nearby regulatory regions. Also involved in the epiblast stage of development and embryonic stem cell pluripotency, by promoting expression of POU5F1/OCT4. Regulates other processes later in development, such as formation of connective tissue in lower jaw and middle ear, neural stem cell differentiation, ovarian follicle development and Sertoli cell differentiation. Involved in exocrine pancreas development and acinar cell differentiation. Acts as an essential transcriptional regulator of lipid metabolism. Key regulator of cholesterol 7-alpha-hydroxylase gene (CYP7A) expression in liver. Also acts as a negative regulator of inflammation in different organs, such as, liver and pancreas. Protects against intestinal inflammation via its ability to regulate glucocorticoid production. Plays an anti-inflammatory role during the hepatic acute phase response by acting as a corepressor: inhibits the hepatic acute phase response by preventing dissociation of the N-Cor corepressor complex. Acts as a regulator of immunity by promoting lymphocyte T-cell development, proliferation and effector functions. Also involved in resolution of endoplasmic reticulum stress in the liver. In Rattus norvegicus (Rat), this protein is Nuclear receptor subfamily 5 group A member 2.